The primary structure comprises 166 residues: Cyanate hydratase (166 aa).

Catalysis depends on residues R92, E95, and S118.

This sequence belongs to the cyanase family.

It catalyses the reaction cyanate + hydrogencarbonate + 3 H(+) = NH4(+) + 2 CO2. Its function is as follows. Catalyzes the reaction of cyanate with bicarbonate to produce ammonia and carbon dioxide. The sequence is that of Cyanate hydratase from Zea mays (Maize).